The primary structure comprises 541 residues: Sorting nexin-27 (541 aa).

Residues 1 to 42 (MADEDGEGIHPSAPHRNGGGGGGGGSGLHCAGNGGGGGGGPR) form a disordered region. Residues 17–41 (NGGGGGGGGSGLHCAGNGGGGGGGP) are compositionally biased toward gly residues. Residues 43 to 136 (VVRIVKSESG…ELILTVLSVP (94 aa)) form the PDZ domain. Phosphoserine is present on residues Ser51 and Ser62. Residues 161–269 (QAVPISVPRY…EFLSESDENY (109 aa)) enclose the PX domain. Positions 273-362 (SDVELRVALP…TCLTIRKWLF (90 aa)) constitute a Ras-associating domain. The segment at 273 to 362 (SDVELRVALP…TCLTIRKWLF (90 aa)) is FERM-like region F1. An FERM-like region F2 region spans residues 373-421 (NDLAVTYFFHQAVDDVKKGYIKAEEKSYQLQKLYEQRKMVMYLNMLRTC). The segment at 425–525 (NEIIFPHCAC…RVFCELKWRK (101 aa)) is FERM-like region F3.

This sequence belongs to the sorting nexin family. As to quaternary structure, core component of the SNX27-retromer, a multiprotein complex composed of SNX27, the WASH complex and the retromer complex. Interacts (via PDZ domain) with a number of target transmembrane proteins (via PDZ-binding motif): ABCC4, ADRB2, ARHGEF7, GRIA1, GRIA2, GRIN1, GRIN2A GRIN2C, KCNJ6, KCNJ9 and SLC2A1/GLUT1. Interacts (via the FERM-like regions) with the WASH complex. Interacts with SNX1. Interacts with CYTIP. Isoform 1 and isoform 2 directly interact with DGKZ. Isoform 1 and isoform 2 interact with HT4R isoform 5-HTA(A). Interacts with MCC. Interacts (via PDZ domains) with SLC9A3; directs SLC9A3 membrane insertion from early endosomes to the plasma membrane. Widely expressed. Expressed in cells of hematopoietic origin (at protein level).

The protein resides in the early endosome membrane. The protein localises to the cytoplasm. Its subcellular location is the cytosol. In terms of biological role, involved in the retrograde transport from endosome to plasma membrane, a trafficking pathway that promotes the recycling of internalized transmembrane proteins. Following internalization, endocytosed transmembrane proteins are delivered to early endosomes and recycled to the plasma membrane instead of being degraded in lysosomes. SNX27 specifically binds and directs sorting of a subset of transmembrane proteins containing a PDZ-binding motif at the C-terminus: following interaction with target transmembrane proteins, associates with the retromer complex, preventing entry into the lysosomal pathway, and promotes retromer-tubule based plasma membrane recycling. SNX27 also binds with the WASH complex. Interacts with membranes containing phosphatidylinositol-3-phosphate (PtdIns(3P)). May participate in establishment of natural killer cell polarity. Recruits CYTIP to early endosomes. This chain is Sorting nexin-27 (SNX27), found in Homo sapiens (Human).